The primary structure comprises 307 residues: Oxygen-dependent coproporphyrinogen-III oxidase (307 aa).

A substrate-binding site is contributed by S99. 2 residues coordinate a divalent metal cation: H103 and H113. H113 (proton donor) is an active-site residue. 115-117 (NVR) is a binding site for substrate. H152 and H182 together coordinate a divalent metal cation. The interval 247–282 (YVEFNLVFDRGTLFGLQSGGRTESILMSMPPVANWR) is important for dimerization. 265–267 (GGR) is a binding site for substrate.

This sequence belongs to the aerobic coproporphyrinogen-III oxidase family. Homodimer. Requires a divalent metal cation as cofactor.

The protein localises to the cytoplasm. It carries out the reaction coproporphyrinogen III + O2 + 2 H(+) = protoporphyrinogen IX + 2 CO2 + 2 H2O. It participates in porphyrin-containing compound metabolism; protoporphyrin-IX biosynthesis; protoporphyrinogen-IX from coproporphyrinogen-III (O2 route): step 1/1. In terms of biological role, involved in the heme biosynthesis. Catalyzes the aerobic oxidative decarboxylation of propionate groups of rings A and B of coproporphyrinogen-III to yield the vinyl groups in protoporphyrinogen-IX. This Burkholderia multivorans (strain ATCC 17616 / 249) protein is Oxygen-dependent coproporphyrinogen-III oxidase.